The sequence spans 705 residues: Elongation factor G (705 aa).

In terms of domain architecture, tr-type G spans 8-290; sequence ERYRNFGIMA…GVVHLLPSPA (283 aa). GTP is bound by residues 17–24, 88–92, and 142–145; these read AHIDAGKT, DTPGH, and NKMD. Residues 290-309 form a disordered region; the sequence is ADRPPVQGIDEDEKEDTRAA.

The protein belongs to the TRAFAC class translation factor GTPase superfamily. Classic translation factor GTPase family. EF-G/EF-2 subfamily.

It localises to the cytoplasm. In terms of biological role, catalyzes the GTP-dependent ribosomal translocation step during translation elongation. During this step, the ribosome changes from the pre-translocational (PRE) to the post-translocational (POST) state as the newly formed A-site-bound peptidyl-tRNA and P-site-bound deacylated tRNA move to the P and E sites, respectively. Catalyzes the coordinated movement of the two tRNA molecules, the mRNA and conformational changes in the ribosome. This Xanthomonas oryzae pv. oryzae (strain MAFF 311018) protein is Elongation factor G.